The primary structure comprises 501 residues: MTDTNVNIIRLTAAEIAAKVASGELTAVQVTEAHLARIDAVDEKVHAFLHVDREGALAQARAVDEKRERGEKLGPLAGVPLALKDIFTTEGIPTTVGSKILEGWIPPYDATLTKKLKAADVVILGKTNMDEFAMGSSTENSAYGPTGNPWDLSRIPGGSGGGSSAALASFEAPLAIGTDTGGSIRQPAAVTGTVGVKPTYGAVSRYGMVAFSSSLDQGGPCARTVLDAALLHEVIAGHDPLDSTSIDAPVPPVVEAARNGSVEGMRVGVVKQFRGEGYQAGVLQRFDESVALLKELGAEIVELDCPSFDLALSAYYLIAPSECSSNLARFDGLRYGVRVGDDGTRSAEEVTALTREAGFGDEVKRRIMLGTYALSSGYYDAYYGSAQKVRTLITRDFEKSFEQVDVIVSPTTPTTAFPIGERADDPMAMYLADLCTIPTNLAGNAAMSLPCGLAPEDNLPVGLQIIAPALKDDRLYKVGAAVEAAFVEKWGHPLIEEAPSL.

Catalysis depends on charge relay system residues Lys-84 and Ser-159. Residue Ser-183 is the Acyl-ester intermediate of the active site.

The protein belongs to the amidase family. GatA subfamily. Heterotrimer of A, B and C subunits.

It carries out the reaction L-glutamyl-tRNA(Gln) + L-glutamine + ATP + H2O = L-glutaminyl-tRNA(Gln) + L-glutamate + ADP + phosphate + H(+). Its function is as follows. Allows the formation of correctly charged Gln-tRNA(Gln) through the transamidation of misacylated Glu-tRNA(Gln) in organisms which lack glutaminyl-tRNA synthetase. The reaction takes place in the presence of glutamine and ATP through an activated gamma-phospho-Glu-tRNA(Gln). In Streptomyces avermitilis (strain ATCC 31267 / DSM 46492 / JCM 5070 / NBRC 14893 / NCIMB 12804 / NRRL 8165 / MA-4680), this protein is Glutamyl-tRNA(Gln) amidotransferase subunit A.